The following is a 440-amino-acid chain: Sialyltransferase-like protein 2 (440 aa).

The Cytoplasmic portion of the chain corresponds to 1-5 (MKLLH). A helical; Signal-anchor for type II membrane protein transmembrane segment spans residues 6 to 26 (LIFLLALTTGISAVLIYIIGV). Residues 27–440 (SNLYESNRFT…HGQLCITPAD (414 aa)) are Lumenal-facing. Residues Asn113 and Asn149 are each glycosylated (N-linked (GlcNAc...) asparagine).

Belongs to the glycosyltransferase 29 family.

It localises to the golgi apparatus membrane. Its function is as follows. May be involved in the transfer of 2-keto-3-deoxy-D-lyxo-heptulosaric acid (Dha) and/or 2-keto-3-deoxy-D-manno-octulosonic acid (Kdo) on the homogalacturonan backbone of rhamnogalacturonan-II. Required for efficient pollen grain germination and pollen tube elongation. Does not possess sialyltransferase activity in vitro. The chain is Sialyltransferase-like protein 2 from Arabidopsis thaliana (Mouse-ear cress).